The primary structure comprises 350 residues: Zona pellucida-binding protein 1 (350 aa).

The N-terminal stretch at 1 to 44 is a signal peptide; that stretch reads MEALAPGRAPRGRRRAGASGSVLSPLSLAAVLLCALLRAPPAVG. N-linked (GlcNAc...) asparagine glycans are attached at residues Asn-113, Asn-186, and Asn-339.

The protein belongs to the zona pellucida-binding protein Sp38 family. Post-translationally, N-glycosylated. As to expression, expressed in testis (at protein level). Expressed in male germ cells.

Its subcellular location is the cytoplasmic vesicle. The protein resides in the secretory vesicle. It is found in the acrosome. It localises to the acrosome membrane. The protein localises to the secreted. In terms of biological role, plays a role in acrosome compaction and sperm morphogenesis. Is implicated in sperm-oocyte interaction during fertilization. The polypeptide is Zona pellucida-binding protein 1 (Zpbp) (Mus musculus (Mouse)).